We begin with the raw amino-acid sequence, 430 residues long: Probable sugar isomerase mlr5709 (430 aa).

Mn(2+) is bound by residues histidine 257, aspartate 289, and aspartate 291.

It belongs to the rhamnose isomerase family. The cofactor is Mn(2+).

The protein is Probable sugar isomerase mlr5709 of Mesorhizobium japonicum (strain LMG 29417 / CECT 9101 / MAFF 303099) (Mesorhizobium loti (strain MAFF 303099)).